Consider the following 357-residue polypeptide: UDP-N-acetylglucosamine--N-acetylmuramyl-(pentapeptide) pyrophosphoryl-undecaprenol N-acetylglucosamine transferase (357 aa).

UDP-N-acetyl-alpha-D-glucosamine is bound by residues 12 to 14 (TGG), N124, R163, S189, I243, 262 to 267 (ALTVSE), and Q288.

The protein belongs to the glycosyltransferase 28 family. MurG subfamily.

The protein localises to the cell inner membrane. The catalysed reaction is di-trans,octa-cis-undecaprenyl diphospho-N-acetyl-alpha-D-muramoyl-L-alanyl-D-glutamyl-meso-2,6-diaminopimeloyl-D-alanyl-D-alanine + UDP-N-acetyl-alpha-D-glucosamine = di-trans,octa-cis-undecaprenyl diphospho-[N-acetyl-alpha-D-glucosaminyl-(1-&gt;4)]-N-acetyl-alpha-D-muramoyl-L-alanyl-D-glutamyl-meso-2,6-diaminopimeloyl-D-alanyl-D-alanine + UDP + H(+). The protein operates within cell wall biogenesis; peptidoglycan biosynthesis. Cell wall formation. Catalyzes the transfer of a GlcNAc subunit on undecaprenyl-pyrophosphoryl-MurNAc-pentapeptide (lipid intermediate I) to form undecaprenyl-pyrophosphoryl-MurNAc-(pentapeptide)GlcNAc (lipid intermediate II). This is UDP-N-acetylglucosamine--N-acetylmuramyl-(pentapeptide) pyrophosphoryl-undecaprenol N-acetylglucosamine transferase from Pseudomonas paraeruginosa (strain DSM 24068 / PA7) (Pseudomonas aeruginosa (strain PA7)).